The chain runs to 422 residues: Testin (422 aa).

The PET domain occupies 92–199 (MILTSPVAAK…GDVKLPKEVE (108 aa)). Positions 135-165 (QPVAGSEGAQYRKKQLAKQLPAHDQDPSKCH) are disordered. Basic and acidic residues predominate over residues 155 to 165 (PAHDQDPSKCH). 3 LIM zinc-binding domains span residues 234–299 (YYCF…SEKP), 300–359 (RCAG…NHAV), and 360–422 (SCQG…KMSS).

The protein belongs to the prickle / espinas / testin family. Expressed in the animal hemisphere at the 4-cell stage. By stage 18, expressed in cells adjacent to the anterior neural plate. In late neurula, expressed in the cranial neural crest. At tail bud stages, expressed strongly in the head, ventral to the developing eye, branchial arches and lateral line placodes. Also localized in the otic vesicle, dorsal fin and notochord with weaker expression at intersomitic junctions of tail bud embryos.

Its subcellular location is the cytoplasm. It localises to the cell cortex. It is found in the cell junction. The protein resides in the focal adhesion. Its function is as follows. Scaffold protein that may play a role in cell adhesion, cell spreading and in the reorganization of the actin cytoskeleton. May inhibit cell growth. Regulates cranial neural crest migration. Acts together with prickle1 to control axial elongation. The sequence is that of Testin from Xenopus laevis (African clawed frog).